A 379-amino-acid polypeptide reads, in one-letter code: Anhydro-N-acetylmuramic acid kinase (379 aa).

Residue 9–16 (GTSADGVD) participates in ATP binding.

It belongs to the anhydro-N-acetylmuramic acid kinase family.

It carries out the reaction 1,6-anhydro-N-acetyl-beta-muramate + ATP + H2O = N-acetyl-D-muramate 6-phosphate + ADP + H(+). It functions in the pathway amino-sugar metabolism; 1,6-anhydro-N-acetylmuramate degradation. The protein operates within cell wall biogenesis; peptidoglycan recycling. Functionally, catalyzes the specific phosphorylation of 1,6-anhydro-N-acetylmuramic acid (anhMurNAc) with the simultaneous cleavage of the 1,6-anhydro ring, generating MurNAc-6-P. Is required for the utilization of anhMurNAc either imported from the medium or derived from its own cell wall murein, and thus plays a role in cell wall recycling. The sequence is that of Anhydro-N-acetylmuramic acid kinase from Prochlorococcus marinus (strain MIT 9303).